Here is a 275-residue protein sequence, read N- to C-terminus: 3-methyl-2-oxobutanoate hydroxymethyltransferase (275 aa).

Mg(2+) is bound by residues Asp-49 and Asp-88. Residues 49-50 (DS), Asp-88, and Lys-118 each bind 3-methyl-2-oxobutanoate. Glu-120 contacts Mg(2+). Residue Glu-187 is the Proton acceptor of the active site.

Belongs to the PanB family. In terms of assembly, homodecamer; pentamer of dimers. It depends on Mg(2+) as a cofactor.

The protein localises to the cytoplasm. The catalysed reaction is 3-methyl-2-oxobutanoate + (6R)-5,10-methylene-5,6,7,8-tetrahydrofolate + H2O = 2-dehydropantoate + (6S)-5,6,7,8-tetrahydrofolate. The protein operates within cofactor biosynthesis; (R)-pantothenate biosynthesis; (R)-pantoate from 3-methyl-2-oxobutanoate: step 1/2. Catalyzes the reversible reaction in which hydroxymethyl group from 5,10-methylenetetrahydrofolate is transferred onto alpha-ketoisovalerate to form ketopantoate. This Brucella suis (strain ATCC 23445 / NCTC 10510) protein is 3-methyl-2-oxobutanoate hydroxymethyltransferase.